We begin with the raw amino-acid sequence, 429 residues long: Glutamate-1-semialdehyde 2,1-aminomutase (429 aa).

At K267 the chain carries N6-(pyridoxal phosphate)lysine.

This sequence belongs to the class-III pyridoxal-phosphate-dependent aminotransferase family. HemL subfamily. Homodimer. Pyridoxal 5'-phosphate serves as cofactor.

It localises to the cytoplasm. The catalysed reaction is (S)-4-amino-5-oxopentanoate = 5-aminolevulinate. It functions in the pathway porphyrin-containing compound metabolism; protoporphyrin-IX biosynthesis; 5-aminolevulinate from L-glutamyl-tRNA(Glu): step 2/2. The chain is Glutamate-1-semialdehyde 2,1-aminomutase from Xanthomonas euvesicatoria pv. vesicatoria (strain 85-10) (Xanthomonas campestris pv. vesicatoria).